A 445-amino-acid polypeptide reads, in one-letter code: uncharacterized protein (445 aa).

His66 contributes to the Zn(2+) binding site. The active-site Proton acceptor is the Glu69. Zn(2+) is bound by residues His70 and Glu146. The tract at residues Gly232 to Leu251 is disordered.

This sequence belongs to the peptidase M16 family. The cofactor is Zn(2+).

This is an uncharacterized protein from Mycobacterium leprae (strain TN).